The chain runs to 489 residues: Glycogen synthase (489 aa).

Arg-20 lines the ADP-alpha-D-glucose pocket.

Belongs to the glycosyltransferase 1 family. Bacterial/plant glycogen synthase subfamily.

It carries out the reaction [(1-&gt;4)-alpha-D-glucosyl](n) + ADP-alpha-D-glucose = [(1-&gt;4)-alpha-D-glucosyl](n+1) + ADP + H(+). It functions in the pathway glycan biosynthesis; glycogen biosynthesis. Its function is as follows. Synthesizes alpha-1,4-glucan chains using ADP-glucose. The chain is Glycogen synthase from Chlorobium luteolum (strain DSM 273 / BCRC 81028 / 2530) (Pelodictyon luteolum).